The sequence spans 374 residues: Golgi-associated kinase 1B (374 aa).

At 1–38 the chain is on the cytoplasmic side; sequence MSPDRTGRGSSSSSSSLKRLVCKSFVRAWGRRRPNLRR. A helical; Signal-anchor for type II membrane protein transmembrane segment spans residues 39–61; the sequence is AVLLICTASAIYGIVIASQVLRG. Over 62 to 374 the chain is Extracellular; that stretch reads STHPGKALRK…LLQVYTRLDR (313 aa). Residues 136-146 are compositionally biased toward basic residues; the sequence is VRPKKRRKYGA. Residues 136-177 are disordered; that stretch reads VRPKKRRKYGARRPGVVQDTESKKDTLWSKVPNSQHKSQAQS. A compositionally biased stretch (polar residues) spans 166 to 177; sequence VPNSQHKSQAQS. Residues N281 and N314 are each glycosylated (N-linked (GlcNAc...) asparagine).

This sequence belongs to the GASK family.

It is found in the golgi apparatus membrane. The chain is Golgi-associated kinase 1B from Xenopus laevis (African clawed frog).